The following is a 142-amino-acid chain: Hemoglobin subunit alpha-A (142 aa).

The region spanning 2–142 (VLSAADKTNV…VATVLTAKYR (141 aa)) is the Globin domain. H59 contributes to the O2 binding site. H88 lines the heme b pocket.

The protein belongs to the globin family. As to quaternary structure, heterotetramer of two alpha chains and two beta chains. Red blood cells.

In terms of biological role, involved in oxygen transport from the lung to the various peripheral tissues. This is Hemoglobin subunit alpha-A (HBAA) from Apus apus (Common swift).